Reading from the N-terminus, the 401-residue chain is Haptoglobin (401 aa).

An N-terminal signal peptide occupies residues 1–18; the sequence is MSALQAVVTLLLCGQLLA. Sushi domains lie at 28 to 83 and 85 to 142; these read DSCP…ECEE and DSCP…ECEA. 3 cysteine pairs are disulfide-bonded: Cys-49–Cys-81, Cys-106–Cys-140, and Cys-144–Cys-261. In terms of domain architecture, Peptidase S1 spans 157–399; sequence IIGGSLDAKG…ILDWVRKTIA (243 aa). Asn-286 and Asn-316 each carry an N-linked (GlcNAc...) asparagine glycan. Cystine bridges form between Cys-304–Cys-335 and Cys-346–Cys-376. Residues 313 to 318 form an interaction with CD163 region; that stretch reads APKNKT.

It belongs to the peptidase S1 family. As to quaternary structure, tetramer of two alpha and two beta chains; disulfide-linked. The hemoglobin/haptoglobin complex is composed of a haptoglobin dimer bound to two hemoglobin alpha-beta dimers. Interacts with CD163. Interacts with ERGIC3. As to expression, expressed by the liver and secreted in plasma.

It is found in the secreted. The protein localises to the extracellular space. Its function is as follows. As a result of hemolysis, hemoglobin is found to accumulate in the kidney and is secreted in the urine. Haptoglobin captures, and combines with free plasma hemoglobin to allow hepatic recycling of heme iron and to prevent kidney damage. Haptoglobin also acts as an antioxidant, has antibacterial activity and plays a role in modulating many aspects of the acute phase response. Hemoglobin/haptoglobin complexes are rapidly cleared by the macrophage CD163 scavenger receptor expressed on the surface of liver Kupfer cells through an endocytic lysosomal degradation pathway. This chain is Haptoglobin (HP), found in Bos taurus (Bovine).